Here is a 481-residue protein sequence, read N- to C-terminus: Glutamyl-tRNA(Gln) amidotransferase subunit A (481 aa).

Active-site charge relay system residues include Lys79 and Ser154. The interval 136-157 is disordered; the sequence is SAFGATKNPRNPEHVPGGSSGG. The Acyl-ester intermediate role is filled by Ser178.

It belongs to the amidase family. GatA subfamily. Heterotrimer of A, B and C subunits.

The catalysed reaction is L-glutamyl-tRNA(Gln) + L-glutamine + ATP + H2O = L-glutaminyl-tRNA(Gln) + L-glutamate + ADP + phosphate + H(+). Its function is as follows. Allows the formation of correctly charged Gln-tRNA(Gln) through the transamidation of misacylated Glu-tRNA(Gln) in organisms which lack glutaminyl-tRNA synthetase. The reaction takes place in the presence of glutamine and ATP through an activated gamma-phospho-Glu-tRNA(Gln). This chain is Glutamyl-tRNA(Gln) amidotransferase subunit A, found in Lachnospira eligens (strain ATCC 27750 / DSM 3376 / VPI C15-48 / C15-B4) (Eubacterium eligens).